The chain runs to 442 residues: Thymidine phosphorylase (442 aa).

Belongs to the thymidine/pyrimidine-nucleoside phosphorylase family. As to quaternary structure, homodimer.

It carries out the reaction thymidine + phosphate = 2-deoxy-alpha-D-ribose 1-phosphate + thymine. It participates in pyrimidine metabolism; dTMP biosynthesis via salvage pathway; dTMP from thymine: step 1/2. Its function is as follows. The enzymes which catalyze the reversible phosphorolysis of pyrimidine nucleosides are involved in the degradation of these compounds and in their utilization as carbon and energy sources, or in the rescue of pyrimidine bases for nucleotide synthesis. This chain is Thymidine phosphorylase, found in Vibrio vulnificus (strain CMCP6).